The primary structure comprises 107 residues: U-scoloptoxin(18)-Er1a (107 aa).

An N-terminal signal peptide occupies residues 1 to 21 (MQRFLCLVACSVVLLVLGIVA).

The protein belongs to the scoloptoxin-18 family. Post-translationally, contains 5 disulfide bonds. Expressed by the venom gland.

It localises to the secreted. This is U-scoloptoxin(18)-Er1a from Ethmostigmus rubripes (Giant centipede).